The sequence spans 98 residues: Feather keratin 2 (98 aa).

Serine 2 carries the N-acetylserine modification.

The protein belongs to the avian keratin family. As to quaternary structure, the avian keratins (F-ker, S-ker, C-ker and B-ker) are a complex mixture of very similar polypeptides.

This is Feather keratin 2 from Gallus gallus (Chicken).